A 108-amino-acid polypeptide reads, in one-letter code: Long neurotoxin 13 (108 aa).

The first 21 residues, 1 to 21, serve as a signal peptide directing secretion; that stretch reads MKTLLLTLVVVTIVCLDLAYT. 5 cysteine pairs are disulfide-bonded: C24–C42, C35–C63, C48–C52, C67–C78, and C79–C84.

The protein belongs to the three-finger toxin family. Long-chain subfamily. Type II alpha-neurotoxin sub-subfamily. As to expression, expressed by the venom gland.

The protein resides in the secreted. Functionally, binds with high affinity to muscular (alpha-1/CHRNA1) and neuronal (alpha-7/CHRNA7) nicotinic acetylcholine receptor (nAChR) and inhibits acetylcholine from binding to the receptor, thereby impairing neuromuscular and neuronal transmission. The sequence is that of Long neurotoxin 13 from Drysdalia coronoides (White-lipped snake).